We begin with the raw amino-acid sequence, 275 residues long: Exosome complex component Rrp42 (275 aa).

It belongs to the RNase PH family. Rrp42 subfamily. As to quaternary structure, component of the archaeal exosome complex. Forms a hexameric ring-like arrangement composed of 3 Rrp41-Rrp42 heterodimers. The hexameric ring associates with a trimer of Rrp4 and/or Csl4 subunits.

Its subcellular location is the cytoplasm. Functionally, non-catalytic component of the exosome, which is a complex involved in RNA degradation. Contributes to the structuring of the Rrp41 active site. This is Exosome complex component Rrp42 from Sulfurisphaera tokodaii (strain DSM 16993 / JCM 10545 / NBRC 100140 / 7) (Sulfolobus tokodaii).